The sequence spans 104 residues: L-rhamnose mutarotase (104 aa).

Tyr18 provides a ligand contact to substrate. The active-site Proton donor is His22. Substrate is bound by residues Tyr41 and 76 to 77 (WW).

It belongs to the rhamnose mutarotase family. As to quaternary structure, homodimer.

The protein localises to the cytoplasm. The catalysed reaction is alpha-L-rhamnose = beta-L-rhamnose. It participates in carbohydrate metabolism; L-rhamnose metabolism. Its function is as follows. Involved in the anomeric conversion of L-rhamnose. The polypeptide is L-rhamnose mutarotase (Listeria monocytogenes serotype 4b (strain F2365)).